Here is a 471-residue protein sequence, read N- to C-terminus: Methylenetetrahydrofolate--tRNA-(uracil-5-)-methyltransferase TrmFO (471 aa).

Residue Gly-9–Gly-14 participates in FAD binding.

It belongs to the MnmG family. TrmFO subfamily. FAD serves as cofactor.

Its subcellular location is the cytoplasm. The catalysed reaction is uridine(54) in tRNA + (6R)-5,10-methylene-5,6,7,8-tetrahydrofolate + NADH + H(+) = 5-methyluridine(54) in tRNA + (6S)-5,6,7,8-tetrahydrofolate + NAD(+). The enzyme catalyses uridine(54) in tRNA + (6R)-5,10-methylene-5,6,7,8-tetrahydrofolate + NADPH + H(+) = 5-methyluridine(54) in tRNA + (6S)-5,6,7,8-tetrahydrofolate + NADP(+). In terms of biological role, catalyzes the folate-dependent formation of 5-methyl-uridine at position 54 (M-5-U54) in all tRNAs. The protein is Methylenetetrahydrofolate--tRNA-(uracil-5-)-methyltransferase TrmFO of Beijerinckia indica subsp. indica (strain ATCC 9039 / DSM 1715 / NCIMB 8712).